A 255-amino-acid chain; its full sequence is 5'-nucleotidase SurE (255 aa).

Residues Asp8, Asp9, Ser39, and Asn91 each coordinate a divalent metal cation.

It belongs to the SurE nucleotidase family. A divalent metal cation is required as a cofactor.

It is found in the cytoplasm. The catalysed reaction is a ribonucleoside 5'-phosphate + H2O = a ribonucleoside + phosphate. Its function is as follows. Nucleotidase that shows phosphatase activity on nucleoside 5'-monophosphates. This chain is 5'-nucleotidase SurE, found in Acinetobacter baumannii (strain ATCC 17978 / DSM 105126 / CIP 53.77 / LMG 1025 / NCDC KC755 / 5377).